A 324-amino-acid chain; its full sequence is Beta-ketoacyl-[acyl-carrier-protein] synthase III (324 aa).

Residues C112 and H249 contribute to the active site. The segment at 250-254 (QANIR) is ACP-binding. Residue N279 is part of the active site.

It belongs to the thiolase-like superfamily. FabH family. In terms of assembly, homodimer.

The protein resides in the cytoplasm. The enzyme catalyses malonyl-[ACP] + acetyl-CoA + H(+) = 3-oxobutanoyl-[ACP] + CO2 + CoA. Its pathway is lipid metabolism; fatty acid biosynthesis. Its function is as follows. Catalyzes the condensation reaction of fatty acid synthesis by the addition to an acyl acceptor of two carbons from malonyl-ACP. Catalyzes the first condensation reaction which initiates fatty acid synthesis and may therefore play a role in governing the total rate of fatty acid production. Possesses both acetoacetyl-ACP synthase and acetyl transacylase activities. Its substrate specificity determines the biosynthesis of branched-chain and/or straight-chain of fatty acids. This Streptococcus sanguinis (strain SK36) protein is Beta-ketoacyl-[acyl-carrier-protein] synthase III.